A 227-amino-acid chain; its full sequence is Ribose-5-phosphate isomerase A (227 aa).

Substrate is bound by residues Thr28–Thr31, Asp84–Asp87, and Lys97–Gly100. The active-site Proton acceptor is the Glu106. Lys124 is a substrate binding site.

Belongs to the ribose 5-phosphate isomerase family. As to quaternary structure, homodimer.

It carries out the reaction aldehydo-D-ribose 5-phosphate = D-ribulose 5-phosphate. The protein operates within carbohydrate degradation; pentose phosphate pathway; D-ribose 5-phosphate from D-ribulose 5-phosphate (non-oxidative stage): step 1/1. In terms of biological role, catalyzes the reversible conversion of ribose-5-phosphate to ribulose 5-phosphate. In Lactiplantibacillus plantarum (strain ATCC BAA-793 / NCIMB 8826 / WCFS1) (Lactobacillus plantarum), this protein is Ribose-5-phosphate isomerase A.